Reading from the N-terminus, the 230-residue chain is Voltage-gated hydrogen channel 1 (230 aa).

Topologically, residues Met-1–Lys-58 are cytoplasmic. A helical transmembrane segment spans residues Phe-59–Leu-79. Topologically, residues Leu-80–Ile-96 are extracellular. Residues Phe-97 to Phe-119 traverse the membrane as a helical segment. Topologically, residues Arg-120–Lys-127 are cytoplasmic. Residues Phe-128–Ser-148 traverse the membrane as a helical segment. Over Arg-149–Ala-155 the chain is Extracellular. Residues Val-156–Val-176 form a helical membrane-spanning segment. The Cytoplasmic segment spans residues Ser-177–Ser-230. Residues Val-178 to Asn-225 adopt a coiled-coil conformation.

Belongs to the hydrogen channel family. In terms of assembly, homodimer.

The protein resides in the membrane. Its subcellular location is the cell membrane. Its function is as follows. Mediates the voltage-dependent proton permeability of excitable membranes. Forms a proton-selective channel through which protons may pass in accordance with their electrochemical gradient. The protein is Voltage-gated hydrogen channel 1 (hvcn1) of Xenopus laevis (African clawed frog).